The following is a 663-amino-acid chain: Forkhead protein sep1 (663 aa).

Residues 128–222 (KPPYSYAMLI…LKLKLRKPGV (95 aa)) constitute a DNA-binding region (fork-head). 2 disordered regions span residues 220–241 (PGVN…KYGS) and 325–387 (SPLQ…DVET). A compositionally biased stretch (low complexity) spans 340-355 (SPASSASPSESLRNES). At Ser-446 the chain carries Phosphoserine.

It is found in the nucleus. Its function is as follows. Required for promoter sequence element PCB-driven, M-phase-specific transcription. Acts as a transcriptional activator with a role in the regulation of mitosis. Regulates septation and the periodic transcription of cdc15. The chain is Forkhead protein sep1 (sep1) from Schizosaccharomyces pombe (strain 972 / ATCC 24843) (Fission yeast).